Reading from the N-terminus, the 121-residue chain is Large ribosomal subunit protein bL12 (121 aa).

It belongs to the bacterial ribosomal protein bL12 family. In terms of assembly, homodimer. Part of the ribosomal stalk of the 50S ribosomal subunit. Forms a multimeric L10(L12)X complex, where L10 forms an elongated spine to which 2 to 4 L12 dimers bind in a sequential fashion. Binds GTP-bound translation factors.

In terms of biological role, forms part of the ribosomal stalk which helps the ribosome interact with GTP-bound translation factors. Is thus essential for accurate translation. The polypeptide is Large ribosomal subunit protein bL12 (Leuconostoc citreum (strain KM20)).